A 371-amino-acid polypeptide reads, in one-letter code: Cysteine endopeptidase Rep1 (371 aa).

A signal peptide spans M1–A28. The propeptide at I29–R133 is activation peptide. 3 cysteine pairs are disulfide-bonded: C156-C198, C190-C231, and C290-C342. C159 is a catalytic residue. N-linked (GlcNAc...) asparagine glycosylation occurs at N228. Catalysis depends on residues H296 and N317.

The protein belongs to the peptidase C1 family. Expressed in germinating seeds.

It is found in the protein storage vacuole. In terms of biological role, cysteine endopeptidase that digests in vitro both the acidic and basic subunits of glutelin, the major seed storage protein of rice. Acts as a negative regulator of cell death. The polypeptide is Cysteine endopeptidase Rep1 (Oryza sativa subsp. japonica (Rice)).